The sequence spans 1394 residues: DNA-directed RNA polymerase subunit beta' (1394 aa).

The Zn(2+) site is built by Cys71, Cys73, Cys86, and Cys89. 3 residues coordinate Mg(2+): Asp462, Asp464, and Asp466. 4 residues coordinate Zn(2+): Cys810, Cys884, Cys891, and Cys894.

The protein belongs to the RNA polymerase beta' chain family. As to quaternary structure, the RNAP catalytic core consists of 2 alpha, 1 beta, 1 beta' and 1 omega subunit. When a sigma factor is associated with the core the holoenzyme is formed, which can initiate transcription. Mg(2+) serves as cofactor. It depends on Zn(2+) as a cofactor.

The catalysed reaction is RNA(n) + a ribonucleoside 5'-triphosphate = RNA(n+1) + diphosphate. DNA-dependent RNA polymerase catalyzes the transcription of DNA into RNA using the four ribonucleoside triphosphates as substrates. This chain is DNA-directed RNA polymerase subunit beta', found in Caulobacter sp. (strain K31).